Consider the following 140-residue polypeptide: Fluoride-specific ion channel FluC 1 (140 aa).

Helical transmembrane passes span 4-24, 32-52, 70-90, and 99-119; these read LYLA…ASFI, FPLA…FILT, TGML…LHLL, and LLYL…GIFL. Na(+) is bound by residues Gly-74 and Thr-77.

The protein belongs to the fluoride channel Fluc/FEX (TC 1.A.43) family.

The protein resides in the cell membrane. The catalysed reaction is fluoride(in) = fluoride(out). Its activity is regulated as follows. Na(+) is not transported, but it plays an essential structural role and its presence is essential for fluoride channel function. In terms of biological role, fluoride-specific ion channel. Important for reducing fluoride concentration in the cell, thus reducing its toxicity. The polypeptide is Fluoride-specific ion channel FluC 1 (Moorella thermoacetica (strain ATCC 39073 / JCM 9320)).